A 303-amino-acid polypeptide reads, in one-letter code: Coenzyme PQQ synthesis protein B (303 aa).

This sequence belongs to the PqqB family.

Its pathway is cofactor biosynthesis; pyrroloquinoline quinone biosynthesis. May be involved in the transport of PQQ or its precursor to the periplasm. This is Coenzyme PQQ synthesis protein B from Pseudomonas putida (strain ATCC 700007 / DSM 6899 / JCM 31910 / BCRC 17059 / LMG 24140 / F1).